The sequence spans 189 residues: uncharacterized protein (189 aa).

The span at 105–115 shows a compositional bias: basic and acidic residues; that stretch reads EKLEKEEESKT. Residues 105–189 form a disordered region; sequence EKLEKEEESK…TDDEKTEVST (85 aa). Positions 116 to 136 are enriched in basic residues; it reads AKKRAKRLRQKAAAKKRKLTK. The span at 141–151 shows a compositional bias: acidic residues; it reads SDESSSDDSDS. The segment covering 161-177 has biased composition (basic and acidic residues); that stretch reads SEGKQNTEVEDKDKVEK. The span at 178–189 shows a compositional bias: acidic residues; it reads EETDDEKTEVST.

This is an uncharacterized protein from Caenorhabditis elegans.